Reading from the N-terminus, the 149-residue chain is Deoxyuridine 5'-triphosphate nucleotidohydrolase (149 aa).

Residues arginine 68 to glycine 70, asparagine 81, threonine 85 to aspartate 87, and lysine 95 each bind substrate.

Belongs to the dUTPase family. It depends on Mg(2+) as a cofactor.

The catalysed reaction is dUTP + H2O = dUMP + diphosphate + H(+). Its pathway is pyrimidine metabolism; dUMP biosynthesis; dUMP from dCTP (dUTP route): step 2/2. In terms of biological role, this enzyme is involved in nucleotide metabolism: it produces dUMP, the immediate precursor of thymidine nucleotides and it decreases the intracellular concentration of dUTP so that uracil cannot be incorporated into DNA. The polypeptide is Deoxyuridine 5'-triphosphate nucleotidohydrolase (Wolinella succinogenes (strain ATCC 29543 / DSM 1740 / CCUG 13145 / JCM 31913 / LMG 7466 / NCTC 11488 / FDC 602W) (Vibrio succinogenes)).